The chain runs to 493 residues: Cholesteryl ester transfer protein (493 aa).

The first 17 residues, 1–17 (MLAATVLTLALLGNAHA), serve as a signal peptide directing secretion. Asparagine 105 carries an N-linked (GlcNAc...) (complex) asparagine glycan. Cysteines 160 and 201 form a disulfide. N-linked (GlcNAc...) asparagine glycans are attached at residues asparagine 257, asparagine 358, and asparagine 413.

This sequence belongs to the BPI/LBP/Plunc superfamily. BPI/LBP family. Expressed by the liver and secreted in plasma.

Its subcellular location is the secreted. It carries out the reaction cholesteryl (9Z-octadecenoate)(in) = cholesteryl (9Z-octadecenoate)(out). The enzyme catalyses 1,2,3-tri-(9Z-octadecenoyl)-glycerol(in) = 1,2,3-tri-(9Z-octadecenoyl)-glycerol(out). It catalyses the reaction cholesteryl (9Z,12Z)-octadecadienoate(in) = cholesteryl (9Z,12Z)-octadecadienoate(out). In terms of biological role, involved in the transfer of neutral lipids, including cholesteryl ester and triglyceride, among lipoprotein particles. Allows the net movement of cholesteryl ester from high density lipoproteins/HDL to triglyceride-rich very low density lipoproteins/VLDL, and the equimolar transport of triglyceride from VLDL to HDL. Regulates the reverse cholesterol transport, by which excess cholesterol is removed from peripheral tissues and returned to the liver for elimination. This chain is Cholesteryl ester transfer protein, found in Homo sapiens (Human).